A 716-amino-acid polypeptide reads, in one-letter code: MPKTAKPKKPVDVAELTKAQAKVEWKRLALELEVHDRLYYQDDAPKISDAEYDELRRRFNAIETRFPELVSSESPSQKVGASPSGRFKKVRHAVPMLSLDNAFAEEDVRDFVGRIARFLKLADDRIDFSAEPKIDGLSMSLRYEGGELVTAATRGDGAEGEDVTANIRTLKDVPQKLHGRNWPDVCEVRGEVYMTKQAFLALNERQKEAGDTIFANPRNSAAGSLRQKDPAITASRPLGFFAYAWGEISGTPPAETQTGMIKWFEQCGFTTNPLTRLCHSVEELIAFHRSIEEQRAELDYDIDGVVYKVDRIDWQERLGFVSRTPRWAIAHKFPAERAMTVLKDIEIQVGRTGSLTPVGKLEPVGVGGVIVQNVTLHNEDYIKGIGNKGEVLREGRDIRIGDTVVIQRAGDVIPQVVDVVIDKRPAQARPFHLPKTCPCPLHTDVVREETATGEEGSRARCTGEFACPYQKIEHLKLFASRRAFDIDGLGEKQIAFFFEQGWVKEPADIFTLQKRNAGLKLEEIEGYGETSVRNLFNAIDARREIALERFIYALGMRHVGETTALALARGYGSWDAFHEACLKVAAGDEEAIAEMDALDQIGDTVIKSVAAYFAEDHNRGIVERLTQEVKILDAEKPKRHSPIATKTVVFTGTLEKMTRDEAKATAERLGAKVSGSVSKKTDYVVAGPGAGSKLKEAQKHGVQVLTEDEWLQLIAE.

NAD(+) contacts are provided by residues 49–53 (DAEYD), 98–99 (SL), and Glu-131. Catalysis depends on Lys-133, which acts as the N6-AMP-lysine intermediate. NAD(+) contacts are provided by Arg-154, Glu-191, Lys-308, and Lys-332. Zn(2+) contacts are provided by Cys-437, Cys-439, Cys-461, and Cys-467. The 79-residue stretch at 638-716 (KRHSPIATKT…EDEWLQLIAE (79 aa)) folds into the BRCT domain.

This sequence belongs to the NAD-dependent DNA ligase family. LigA subfamily. The cofactor is Mg(2+). It depends on Mn(2+) as a cofactor.

It carries out the reaction NAD(+) + (deoxyribonucleotide)n-3'-hydroxyl + 5'-phospho-(deoxyribonucleotide)m = (deoxyribonucleotide)n+m + AMP + beta-nicotinamide D-nucleotide.. Its function is as follows. DNA ligase that catalyzes the formation of phosphodiester linkages between 5'-phosphoryl and 3'-hydroxyl groups in double-stranded DNA using NAD as a coenzyme and as the energy source for the reaction. It is essential for DNA replication and repair of damaged DNA. This is DNA ligase from Bradyrhizobium sp. (strain BTAi1 / ATCC BAA-1182).